A 255-amino-acid chain; its full sequence is Type III pantothenate kinase (255 aa).

Position 6–13 (Asp6–Val13) interacts with ATP. Substrate-binding positions include Tyr100 and Gly107 to Arg110. The active-site Proton acceptor is Asp109. Asp129 is a binding site for K(+). Thr132 contacts ATP. Position 184 (Thr184) interacts with substrate.

It belongs to the type III pantothenate kinase family. As to quaternary structure, homodimer. It depends on NH4(+) as a cofactor. Requires K(+) as cofactor.

It localises to the cytoplasm. The enzyme catalyses (R)-pantothenate + ATP = (R)-4'-phosphopantothenate + ADP + H(+). It participates in cofactor biosynthesis; coenzyme A biosynthesis; CoA from (R)-pantothenate: step 1/5. Catalyzes the phosphorylation of pantothenate (Pan), the first step in CoA biosynthesis. The protein is Type III pantothenate kinase of Ruminiclostridium cellulolyticum (strain ATCC 35319 / DSM 5812 / JCM 6584 / H10) (Clostridium cellulolyticum).